The following is a 261-amino-acid chain: Probable septum site-determining protein MinC (261 aa).

A disordered region spans residues 106 to 145 (RAPAAKPADEAEPAAVPAVETAAAPAAAAAPEQPSEPAPT). Residues 118–144 (PAAVPAVETAAAPAAAAAPEQPSEPAP) are compositionally biased toward low complexity.

It belongs to the MinC family. As to quaternary structure, interacts with MinD and FtsZ.

Cell division inhibitor that blocks the formation of polar Z ring septums. Rapidly oscillates between the poles of the cell to destabilize FtsZ filaments that have formed before they mature into polar Z rings. Prevents FtsZ polymerization. This is Probable septum site-determining protein MinC from Burkholderia orbicola (strain AU 1054).